The following is a 254-amino-acid chain: Probable transcriptional regulatory protein Saro_0419 (254 aa).

The segment covering 1 to 14 has biased composition (basic residues); sequence MAGHSKFKNIMHRK. The segment at 1–22 is disordered; it reads MAGHSKFKNIMHRKGAQDKKRS.

The protein belongs to the TACO1 family.

The protein localises to the cytoplasm. The sequence is that of Probable transcriptional regulatory protein Saro_0419 from Novosphingobium aromaticivorans (strain ATCC 700278 / DSM 12444 / CCUG 56034 / CIP 105152 / NBRC 16084 / F199).